The chain runs to 189 residues: Peptidyl-tRNA hydrolase (189 aa).

Position 14 (tyrosine 14) interacts with tRNA. The active-site Proton acceptor is the histidine 19. TRNA is bound by residues tyrosine 64, asparagine 66, and asparagine 112.

The protein belongs to the PTH family. In terms of assembly, monomer.

The protein resides in the cytoplasm. The enzyme catalyses an N-acyl-L-alpha-aminoacyl-tRNA + H2O = an N-acyl-L-amino acid + a tRNA + H(+). Its function is as follows. Hydrolyzes ribosome-free peptidyl-tRNAs (with 1 or more amino acids incorporated), which drop off the ribosome during protein synthesis, or as a result of ribosome stalling. In terms of biological role, catalyzes the release of premature peptidyl moieties from peptidyl-tRNA molecules trapped in stalled 50S ribosomal subunits, and thus maintains levels of free tRNAs and 50S ribosomes. In Clostridium botulinum (strain Langeland / NCTC 10281 / Type F), this protein is Peptidyl-tRNA hydrolase.